We begin with the raw amino-acid sequence, 177 residues long: Large ribosomal subunit protein uL6 (177 aa).

This sequence belongs to the universal ribosomal protein uL6 family. In terms of assembly, part of the 50S ribosomal subunit.

Functionally, this protein binds to the 23S rRNA, and is important in its secondary structure. It is located near the subunit interface in the base of the L7/L12 stalk, and near the tRNA binding site of the peptidyltransferase center. The sequence is that of Large ribosomal subunit protein uL6 from Cupriavidus taiwanensis (strain DSM 17343 / BCRC 17206 / CCUG 44338 / CIP 107171 / LMG 19424 / R1) (Ralstonia taiwanensis (strain LMG 19424)).